Consider the following 322-residue polypeptide: N-acetyl-gamma-glutamyl-phosphate reductase (322 aa).

Residue Cys-117 is part of the active site.

It belongs to the NAGSA dehydrogenase family. Type 2 subfamily.

It localises to the cytoplasm. It carries out the reaction N-acetyl-L-glutamate 5-semialdehyde + phosphate + NADP(+) = N-acetyl-L-glutamyl 5-phosphate + NADPH + H(+). Its pathway is amino-acid biosynthesis; L-arginine biosynthesis; N(2)-acetyl-L-ornithine from L-glutamate: step 3/4. Its function is as follows. Catalyzes the NADPH-dependent reduction of N-acetyl-5-glutamyl phosphate to yield N-acetyl-L-glutamate 5-semialdehyde. The protein is N-acetyl-gamma-glutamyl-phosphate reductase of Trichormus variabilis (strain ATCC 29413 / PCC 7937) (Anabaena variabilis).